Consider the following 364-residue polypeptide: Paraneoplastic antigen Ma2 homolog (364 aa).

Ala2 carries the N-acetylalanine modification. Residues 335 to 353 (EEEEASFENESIEEPEEGD) show a composition bias toward acidic residues. Residues 335–364 (EEEEASFENESIEEPEEGDGYGRWNHEGDD) are disordered.

The protein belongs to the PNMA family.

It localises to the nucleus. The protein resides in the nucleolus. The protein is Paraneoplastic antigen Ma2 homolog (PNMA2) of Pongo abelii (Sumatran orangutan).